The chain runs to 117 residues: uncharacterized protein (117 aa).

This is an uncharacterized protein from Schizosaccharomyces pombe (strain 972 / ATCC 24843) (Fission yeast).